The sequence spans 395 residues: Phosphoglycerate kinase (395 aa).

Residues 21-23 (DLN), Arg-36, 59-62 (HLGR), Arg-113, and Arg-146 contribute to the substrate site. Residues Lys-197, Glu-324, and 350–353 (GGDT) contribute to the ATP site.

The protein belongs to the phosphoglycerate kinase family. In terms of assembly, monomer.

It localises to the cytoplasm. It catalyses the reaction (2R)-3-phosphoglycerate + ATP = (2R)-3-phospho-glyceroyl phosphate + ADP. It functions in the pathway carbohydrate degradation; glycolysis; pyruvate from D-glyceraldehyde 3-phosphate: step 2/5. The protein is Phosphoglycerate kinase of Acinetobacter baylyi (strain ATCC 33305 / BD413 / ADP1).